Reading from the N-terminus, the 648-residue chain is Sodium/nucleoside cotransporter 1 (648 aa).

The Cytoplasmic segment spans residues 1–83 (MADDTPRQRE…LCREHWQLFE (83 aa)). A helical transmembrane segment spans residues 84–104 (WISKGLLSTAYIGFLIVACLL). Residues 105 to 108 (DFPR) are Extracellular-facing. A helical membrane pass occupies residues 109 to 129 (ALALFVITCVVLVFLAYNLLK). At 130 to 147 (RLLGSKLKKCVKFQGHSC) the chain is on the cytoplasmic side. The helical transmembrane segment at 148–168 (LSLWLKRGLALAAGLGVILWL) threads the bilayer. The Extracellular portion of the chain corresponds to 169 to 175 (SLDTAQR). The chain crosses the membrane as a helical span at residues 176–196 (PEQLVSFAGICVFLVLLFAGS). At 197–201 (KHHRA) the chain is on the cytoplasmic side. Residues 202 to 222 (VSWRAVSWGLGLQFVLGLFVI) traverse the membrane as a helical segment. At 223 to 265 (RTEPGFVAFQWLGDQIRVFLSYTEAGSSFVFGEALVKDVFAFQ) the chain is on the extracellular side. The helical transmembrane segment at 266–286 (VLPIIVFFSCVMSVLYYLGLM) threads the bilayer. Residues 287 to 294 (QWVILKIA) lie on the Cytoplasmic side of the membrane. The helical transmembrane segment at 295-318 (WLMQVTMGTSATETLSVAGNIFVS) threads the bilayer. The Extracellular portion of the chain corresponds to 319-339 (QTEAPLLIRPYLADMTLSEVH). Residues 340-360 (VVMTGGYATIAGSLLGAYISF) form a helical membrane-spanning segment. A topological domain (cytoplasmic) is located at residue G361. A helical membrane pass occupies residues 362–380 (IDASSLIAASVMAAPCALA). Residues 381 to 427 (LSKLVYPEVEESKFRSEEGVKLTYGDAQNLVEAASAGAAISVKVVAN) are Extracellular-facing. The chain crosses the membrane as a helical span at residues 428-448 (IAANLIAFLAVLAFINAALSW). Residues 449–470 (LGDMVDIQGLSFQLICSYVLRP) lie on the Cytoplasmic side of the membrane. A helical membrane pass occupies residues 471–491 (VAFLMGVAWEDCPVVAELLGI). At 492-531 (KLFLNEFVAYQELSQYKQRRLAGAEEWLGDKKQWISVRAE) the chain is on the extracellular side. The helical transmembrane segment at 532-552 (ILTTYALCGFANFSSIGIMLG) threads the bilayer. Residues 553-571 (GLTSMVPQRRSDFSQIVLR) are Cytoplasmic-facing. The helical transmembrane segment at 572–592 (ALITGAFVSLVNACVAGILYV) threads the bilayer. The Extracellular segment spans residues 593-648 (PRGVEVDCMSLLNQTVSSSSFEVYLCCRQVFQNTSLEFGQEALHNCCRFYNHTVCT). Residues N605, N625, and N643 are each glycosylated (N-linked (GlcNAc...) asparagine).

It belongs to the concentrative nucleoside transporter (CNT) (TC 2.A.41) family. Post-translationally, N-glycosylated. N-glycosylation is required for localization to the plasma membrane and the transporter activity.

It is found in the cell membrane. It localises to the apical cell membrane. It carries out the reaction uridine(out) + Na(+)(out) = uridine(in) + Na(+)(in). It catalyses the reaction thymidine(out) + Na(+)(out) = thymidine(in) + Na(+)(in). The enzyme catalyses cytidine(out) + Na(+)(out) = cytidine(in) + Na(+)(in). The catalysed reaction is adenosine(out) + Na(+)(out) = adenosine(in) + Na(+)(in). With respect to regulation, due to its high apparent affinity but slow transport, adenosine could act as a negative regulator of pyrimidine transport under some conditions. Sodium and pyrimidine nucleoside symporter of the plasma membrane that imports uridine, thymidine and cytidine into cells by coupling their transport to the transmembrane sodium electrochemical gradient. Also transports adenosine, an atypical substrate transported with high apparent affinity, but low maximum velocity. Therefore, exhibits the transport characteristics of the nucleoside transport system cit or N2 subtype (N2/cit). Involved in renal nucleoside (re)absorption. This Mus musculus (Mouse) protein is Sodium/nucleoside cotransporter 1.